The chain runs to 691 residues: Glycine--tRNA ligase beta subunit (691 aa).

Belongs to the class-II aminoacyl-tRNA synthetase family. Tetramer of two alpha and two beta subunits.

It is found in the cytoplasm. It catalyses the reaction tRNA(Gly) + glycine + ATP = glycyl-tRNA(Gly) + AMP + diphosphate. This is Glycine--tRNA ligase beta subunit from Limosilactobacillus reuteri (strain DSM 20016) (Lactobacillus reuteri).